The chain runs to 301 residues: UDP-N-acetylenolpyruvoylglucosamine reductase 1 (301 aa).

Residues 29–196 (KIGGPADILI…LEAVFQLQAG (168 aa)) form the FAD-binding PCMH-type domain. Arginine 174 is a catalytic residue. Serine 225 serves as the catalytic Proton donor. Residue glutamate 295 is part of the active site.

This sequence belongs to the MurB family. Requires FAD as cofactor.

The protein localises to the cytoplasm. The catalysed reaction is UDP-N-acetyl-alpha-D-muramate + NADP(+) = UDP-N-acetyl-3-O-(1-carboxyvinyl)-alpha-D-glucosamine + NADPH + H(+). The protein operates within cell wall biogenesis; peptidoglycan biosynthesis. Cell wall formation. This chain is UDP-N-acetylenolpyruvoylglucosamine reductase 1 (murB1), found in Bacillus cereus (strain ATCC 14579 / DSM 31 / CCUG 7414 / JCM 2152 / NBRC 15305 / NCIMB 9373 / NCTC 2599 / NRRL B-3711).